A 505-amino-acid chain; its full sequence is Circadian clock protein KaiC3 (505 aa).

2 consecutive KaiC domains span residues 10–252 (EKLE…KSSD) and 253–485 (IRIT…LAGT). At serine 423 the chain carries Phosphoserine; by autocatalysis. Phosphothreonine; by autocatalysis is present on threonine 424.

Belongs to the KaiC family. Multimerizes, probably forming homohexamers, no interaction with KaiC1 or KaiC2 is seen. In another study forms hexamers, interacts with KaiB1, KaiB3, and KaiC1. Post-translationally, autophosphorylates and dephosphorylates. Dephosphorylation of KaiC3 was higher at 25 than at 30 or 35 degrees Celsius.

It carries out the reaction L-seryl-[protein] + ATP = O-phospho-L-seryl-[protein] + ADP + H(+). The catalysed reaction is L-threonyl-[protein] + ATP = O-phospho-L-threonyl-[protein] + ADP + H(+). It catalyses the reaction ATP + H2O = ADP + phosphate + H(+). Its activity is regulated as follows. ATPase activity is influenced by KaiB1 and KaiB3 in vitro; ATPase is reduced 35% by the KaiB1 tetramer and 55% by the KaiB3 monomer but not affected by KaiA or the KaiB3 tetramer. In terms of biological role, seems to be linked to dark adaption of Synechocystis cells, but is not as essential as the core oscillator KaiAB1C1 for the circadian cycle. KaiB3 and KaiC3 may cross talk with the core oscillator. Autophosphorylates and dephosphorylates independently of KaiA. Has a weak ATPase, hydrolyzes 8.5 ATP/monomer/day, has no detectable ATP synthesis activity. ATPase activity reduced 55% by KaiB3 monomer but not the KaiB3 tetramer or KaiA in vitro, reduced 35% by KaiB1 tetramer. The chain is Circadian clock protein KaiC3 from Synechocystis sp. (strain ATCC 27184 / PCC 6803 / Kazusa).